We begin with the raw amino-acid sequence, 224 residues long: Small ribosomal subunit protein uS3 (224 aa).

Residues 38–106 (LREFVKEKLG…EVYLNVVEVR (69 aa)) form the KH type-2 domain.

The protein belongs to the universal ribosomal protein uS3 family. As to quaternary structure, part of the 30S ribosomal subunit. Forms a tight complex with proteins S10 and S14.

In terms of biological role, binds the lower part of the 30S subunit head. Binds mRNA in the 70S ribosome, positioning it for translation. The polypeptide is Small ribosomal subunit protein uS3 (Anaeromyxobacter dehalogenans (strain 2CP-1 / ATCC BAA-258)).